A 431-amino-acid polypeptide reads, in one-letter code: ETS domain-containing protein Elk-4 (431 aa).

The segment at residues Ile-5–Val-85 is a DNA-binding region (ETS). The disordered stretch occupies residues Ser-114–Asn-139. A compositionally biased stretch (basic and acidic residues) spans Lys-118–Pro-128. Lys-167 participates in a covalent cross-link: Glycyl lysine isopeptide (Lys-Gly) (interchain with G-Cter in SUMO2). Ser-180 bears the Phosphoserine mark. Disordered stretches follow at residues Thr-251 to Ile-282, Glu-294 to Lys-323, and Thr-411 to Thr-431. The span at Leu-261 to Ser-273 shows a compositional bias: pro residues. A compositionally biased stretch (basic and acidic residues) spans Glu-299–Val-313.

The protein belongs to the ETS family. As to quaternary structure, interacts with SIRT7.

It is found in the nucleus. Its function is as follows. Involved in both transcriptional activation and repression. Interaction with SIRT7 leads to recruitment and stabilization of SIRT7 at promoters, followed by deacetylation of histone H3 at 'Lys-18' (H3K18Ac) and subsequent transcription repression. Forms a ternary complex with the serum response factor (SRF). Requires DNA-bound SRF for ternary complex formation and makes extensive DNA contacts to the 5'side of SRF, but does not bind DNA autonomously. This Homo sapiens (Human) protein is ETS domain-containing protein Elk-4 (ELK4).